The primary structure comprises 246 residues: UDP-N-acetyl-D-mannosaminuronic acid transferase (246 aa).

This sequence belongs to the glycosyltransferase 26 family.

It carries out the reaction UDP-N-acetyl-alpha-D-mannosaminouronate + N-acetyl-alpha-D-glucosaminyl-di-trans,octa-cis-undecaprenyl diphosphate = beta-D-ManNAcA-(1-&gt;4)-alpha-D-GlcNAc-di-trans,octa-cis-undecaprenyl diphosphate + UDP + H(+). It functions in the pathway bacterial outer membrane biogenesis; enterobacterial common antigen biosynthesis. Catalyzes the synthesis of Und-PP-GlcNAc-ManNAcA (Lipid II), the second lipid-linked intermediate involved in enterobacterial common antigen (ECA) synthesis. The sequence is that of UDP-N-acetyl-D-mannosaminuronic acid transferase from Yersinia pestis bv. Antiqua (strain Antiqua).